Consider the following 239-residue polypeptide: RNA chaperone ProQ (239 aa).

The segment at 107–177 (KARVQAQRAE…RKPVAKPVQA (71 aa)) is disordered. A compositionally biased stretch (basic and acidic residues) spans 115 to 137 (AEQRAKKREAENVAAGEKNERPT).

It belongs to the ProQ family.

It localises to the cytoplasm. Functionally, RNA chaperone with significant RNA binding, RNA strand exchange and RNA duplexing activities. May regulate ProP activity through an RNA-based, post-transcriptional mechanism. In Photorhabdus laumondii subsp. laumondii (strain DSM 15139 / CIP 105565 / TT01) (Photorhabdus luminescens subsp. laumondii), this protein is RNA chaperone ProQ.